Consider the following 262-residue polypeptide: Shikimate dehydrogenase (NADP(+)) (262 aa).

Residues 15–17 (SRS) and T62 each bind shikimate. Catalysis depends on K66, which acts as the Proton acceptor. E78 contributes to the NADP(+) binding site. 2 residues coordinate shikimate: N87 and D102. NADP(+) contacts are provided by residues 126 to 130 (GAGGA), 150 to 155 (NRTLAR), and M214. Y216 contacts shikimate. G236 serves as a coordination point for NADP(+).

It belongs to the shikimate dehydrogenase family. Homodimer.

It carries out the reaction shikimate + NADP(+) = 3-dehydroshikimate + NADPH + H(+). It participates in metabolic intermediate biosynthesis; chorismate biosynthesis; chorismate from D-erythrose 4-phosphate and phosphoenolpyruvate: step 4/7. In terms of biological role, involved in the biosynthesis of the chorismate, which leads to the biosynthesis of aromatic amino acids. Catalyzes the reversible NADPH linked reduction of 3-dehydroshikimate (DHSA) to yield shikimate (SA). The sequence is that of Shikimate dehydrogenase (NADP(+)) from Acinetobacter baumannii (strain ATCC 17978 / DSM 105126 / CIP 53.77 / LMG 1025 / NCDC KC755 / 5377).